A 390-amino-acid chain; its full sequence is E3 ubiquitin-protein ligase At4g11680 (390 aa).

Positions 1–19 (MSSSSSTTTNTTTESDSSS) are enriched in low complexity. The disordered stretch occupies residues 1–39 (MSSSSSTTTNTTTESDSSSLPTHIGRSNSDGIIDTTPFL). The next 5 helical transmembrane spans lie at 109–129 (VVFL…AVLI), 142–162 (VWVV…CVEY), 212–232 (MFSF…GQTL), 244–264 (IIFL…ACVI), and 265–285 (GLAV…VADQ). Residues 338 to 379 (CCICLCEYEDGVELRELPCNHHFHCTCIDKWLHINSRCPLCK) form an RING-type; atypical zinc finger.

The protein resides in the membrane. It catalyses the reaction S-ubiquitinyl-[E2 ubiquitin-conjugating enzyme]-L-cysteine + [acceptor protein]-L-lysine = [E2 ubiquitin-conjugating enzyme]-L-cysteine + N(6)-ubiquitinyl-[acceptor protein]-L-lysine.. The protein operates within protein modification; protein ubiquitination. Mediates E2-dependent protein ubiquitination in vitro. This Arabidopsis thaliana (Mouse-ear cress) protein is E3 ubiquitin-protein ligase At4g11680.